Reading from the N-terminus, the 256-residue chain is Thiazole synthase (256 aa).

The active-site Schiff-base intermediate with DXP is the Lys95. 1-deoxy-D-xylulose 5-phosphate is bound by residues Gly156, 182–183 (AG), and 204–205 (NT).

The protein belongs to the ThiG family. Homotetramer. Forms heterodimers with either ThiH or ThiS.

The protein localises to the cytoplasm. The catalysed reaction is [ThiS sulfur-carrier protein]-C-terminal-Gly-aminoethanethioate + 2-iminoacetate + 1-deoxy-D-xylulose 5-phosphate = [ThiS sulfur-carrier protein]-C-terminal Gly-Gly + 2-[(2R,5Z)-2-carboxy-4-methylthiazol-5(2H)-ylidene]ethyl phosphate + 2 H2O + H(+). The protein operates within cofactor biosynthesis; thiamine diphosphate biosynthesis. In terms of biological role, catalyzes the rearrangement of 1-deoxy-D-xylulose 5-phosphate (DXP) to produce the thiazole phosphate moiety of thiamine. Sulfur is provided by the thiocarboxylate moiety of the carrier protein ThiS. In vitro, sulfur can be provided by H(2)S. This chain is Thiazole synthase, found in Klebsiella pneumoniae (strain 342).